A 325-amino-acid polypeptide reads, in one-letter code: Putative gluconeogenesis factor (325 aa).

Belongs to the gluconeogenesis factor family.

It localises to the cytoplasm. Its function is as follows. Required for morphogenesis under gluconeogenic growth conditions. The polypeptide is Putative gluconeogenesis factor (Streptococcus pyogenes serotype M3 (strain ATCC BAA-595 / MGAS315)).